A 221-amino-acid polypeptide reads, in one-letter code: Transmembrane protein 267 (221 aa).

The next 5 helical transmembrane spans lie at 28–48 (ASAGLGAFCFVADHFLTLPFI), 57–77 (LFDNTVHAIIGLWSWAIVIGL), 86–106 (VILAGFLASVIDLDHFYMAGS), 121–141 (LHCSTLIPALCFSLRLLMWAC), and 182–204 (ISYWLYVTITATLPHLCSVLMYL).

It localises to the membrane. The chain is Transmembrane protein 267 (tmem267) from Danio rerio (Zebrafish).